We begin with the raw amino-acid sequence, 241 residues long: Large ribosomal subunit protein uL3 (241 aa).

2 disordered regions span residues 139–166 (VSHRSIGSTGGRQDPGKTFKNKKMPGHM) and 209–241 (KKPLPKDAPKPGKFKVAGDDKVTADAPTEKEGA). At glutamine 151 the chain carries N5-methylglutamine.

Belongs to the universal ribosomal protein uL3 family. Part of the 50S ribosomal subunit. Forms a cluster with proteins L14 and L19. Methylated by PrmB.

One of the primary rRNA binding proteins, it binds directly near the 3'-end of the 23S rRNA, where it nucleates assembly of the 50S subunit. In Nitrobacter hamburgensis (strain DSM 10229 / NCIMB 13809 / X14), this protein is Large ribosomal subunit protein uL3.